The primary structure comprises 535 residues: MNIPQEVARRRTFAIISHPDAGKTTLTEKLLLFAGAIQIAGSVKARKASRHASSDWMEIEKQRGISVASSVMQMEYRDCVINLLDTPGHQDFSEDTYRVLTAVDAALMVIDAANGVEPQTIRLLQVCRARNTPIITFINKLDREVREPLELLSEIEGHLGMDTVPFSWPVGMGKAFGGVFDIRRNRMRIFRAGQERRGEDDEFIDGLDNPEIPRRFGAAFAQASGEIELINEAAPAFDREAFLAGKQTPVFFGSAINNFGVQEVLDALVDQAPAPGPRQALEREVRPDEPKFTGVVFKVQANMDPAHRDRVAFVRVSSGRFERGMRLKVARTGKEMRPNNVVSFLSQRRELLDEAYAGDVIGIPNHGVLQLGDVLTEGESLRFTGLPFFAPELFQAVEVKDPLRTKQLRVGLTQLGEEGAIQVFRPEAAGGALLLGAVGQLQFEVVAHRLKTEYGVDARMMPSRYTSARWITSDDPRALRKFMDANAAHIAYDVVDAAAFLITSPAQLRVAEDLYPNVKFHALREHGGKVFGDKA.

The tr-type G domain occupies 8–278 (ARRRTFAIIS…VDQAPAPGPR (271 aa)). Residues 17–24 (SHPDAGKT), 85–89 (DTPGH), and 139–142 (NKLD) each bind GTP.

The protein belongs to the TRAFAC class translation factor GTPase superfamily. Classic translation factor GTPase family. PrfC subfamily.

The protein localises to the cytoplasm. In terms of biological role, increases the formation of ribosomal termination complexes and stimulates activities of RF-1 and RF-2. It binds guanine nucleotides and has strong preference for UGA stop codons. It may interact directly with the ribosome. The stimulation of RF-1 and RF-2 is significantly reduced by GTP and GDP, but not by GMP. The polypeptide is Peptide chain release factor 3 (Bordetella bronchiseptica (strain ATCC BAA-588 / NCTC 13252 / RB50) (Alcaligenes bronchisepticus)).